The sequence spans 168 residues: uncharacterized protein (168 aa).

2 helical membrane passes run 4 to 24 (IIAL…PEEE) and 94 to 114 (IMVG…GFAW).

It to A.aeolicus aq_1446.

Its subcellular location is the cell membrane. This is an uncharacterized protein from Aquifex aeolicus (strain VF5).